The chain runs to 517 residues: Probable cytosol aminopeptidase (517 aa).

The Mn(2+) site is built by K279 and D284. K291 is an active-site residue. Mn(2+)-binding residues include D302, D361, and E363. The active site involves R365.

It belongs to the peptidase M17 family. Mn(2+) is required as a cofactor.

The protein resides in the cytoplasm. It catalyses the reaction Release of an N-terminal amino acid, Xaa-|-Yaa-, in which Xaa is preferably Leu, but may be other amino acids including Pro although not Arg or Lys, and Yaa may be Pro. Amino acid amides and methyl esters are also readily hydrolyzed, but rates on arylamides are exceedingly low.. The enzyme catalyses Release of an N-terminal amino acid, preferentially leucine, but not glutamic or aspartic acids.. Its function is as follows. Presumably involved in the processing and regular turnover of intracellular proteins. Catalyzes the removal of unsubstituted N-terminal amino acids from various peptides. This chain is Probable cytosol aminopeptidase, found in Streptomyces coelicolor (strain ATCC BAA-471 / A3(2) / M145).